Consider the following 326-residue polypeptide: Phospho-N-acetylmuramoyl-pentapeptide-transferase (326 aa).

Helical transmembrane passes span 3-23 (ISIS…PAFI), 51-71 (TMGG…VALF), 79-99 (VGMI…DDFL), 115-135 (LALQ…GGDM), 138-158 (IFGY…FWLV), 169-189 (GIDG…GVIA), 195-215 (MDIL…FVFN), 221-243 (VFMG…MALH), and 304-324 (VDFF…AILY).

It belongs to the glycosyltransferase 4 family. MraY subfamily. Requires Mg(2+) as cofactor.

Its subcellular location is the cell membrane. It carries out the reaction UDP-N-acetyl-alpha-D-muramoyl-L-alanyl-gamma-D-glutamyl-L-lysyl-D-alanyl-D-alanine + di-trans,octa-cis-undecaprenyl phosphate = Mur2Ac(oyl-L-Ala-gamma-D-Glu-L-Lys-D-Ala-D-Ala)-di-trans,octa-cis-undecaprenyl diphosphate + UMP. It functions in the pathway cell wall biogenesis; peptidoglycan biosynthesis. Its function is as follows. Catalyzes the initial step of the lipid cycle reactions in the biosynthesis of the cell wall peptidoglycan: transfers peptidoglycan precursor phospho-MurNAc-pentapeptide from UDP-MurNAc-pentapeptide onto the lipid carrier undecaprenyl phosphate, yielding undecaprenyl-pyrophosphoryl-MurNAc-pentapeptide, known as lipid I. This Streptococcus pneumoniae (strain Hungary19A-6) protein is Phospho-N-acetylmuramoyl-pentapeptide-transferase.